The sequence spans 456 residues: Protein translocase subunit SecY (456 aa).

Residues methionine 1 to proline 21 lie on the Cytoplasmic side of the membrane. Residues glycine 22–proline 48 traverse the membrane as a helical segment. Topologically, residues leucine 49 to glutamine 59 are extracellular. Residues phenylalanine 60–leucine 67 constitute an intramembrane region (helical). Residues phenylalanine 60 to isoleucine 88 form a discontinuously helical membrane-spanning segment. Residues alanine 68 to isoleucine 79 lie within the membrane without spanning it. An intramembrane region (helical) is located at residues glycine 80–isoleucine 88. Residues leucine 89–alanine 109 are Cytoplasmic-facing. Residues phenylalanine 110–glycine 134 traverse the membrane as a helical segment. The Extracellular segment spans residues serine 135–proline 141. The helical transmembrane segment at glutamine 142–serine 166 threads the bilayer. The Cytoplasmic segment spans residues lysine 167–serine 172. Residues glycine 173–phenylalanine 191 form a helical membrane-spanning segment. Topologically, residues asparagine 192 to tyrosine 224 are extracellular. The helical transmembrane segment at tyrosine 225–arginine 246 threads the bilayer. Over valine 247 to serine 275 the chain is Cytoplasmic. Residues asparagine 276–glutamine 297 traverse the membrane as a helical segment. Residues lysine 298 to phenylalanine 334 lie on the Extracellular side of the membrane. The chain crosses the membrane as a helical span at residues arginine 335 to tryptophan 354. Residues valine 355 to isoleucine 397 lie on the Cytoplasmic side of the membrane. The chain crosses the membrane as a helical span at residues threonine 398 to glycine 416. At serine 417–glycine 419 the chain is on the extracellular side. A helical transmembrane segment spans residues glycine 420 to leucine 434. Topologically, residues tyrosine 435–aspartate 456 are cytoplasmic.

The protein belongs to the SecY/SEC61-alpha family. As to quaternary structure, component of the Sec protein translocase complex. Heterotrimer consisting of alpha (SecY), beta (SecG) and gamma (SecE) subunits. The heterotrimers can form oligomers, although 1 heterotrimer is thought to be able to translocate proteins. Interacts with the ribosome. May interact with SecDF, and other proteins may be involved.

It is found in the cell membrane. Its function is as follows. The central subunit of the protein translocation channel SecYEG. Consists of two halves formed by TMs 1-5 and 6-10. These two domains form a lateral gate at the front which open onto the bilayer between TMs 2 and 7, and are clamped together by SecE at the back. The channel is closed by both a pore ring composed of hydrophobic SecY resides and a short helix (helix 2A) on the extracellular side of the membrane which forms a plug. The plug probably moves laterally to allow the channel to open. The ring and the pore may move independently. This is Protein translocase subunit SecY from Methanothermobacter thermautotrophicus (strain ATCC 29096 / DSM 1053 / JCM 10044 / NBRC 100330 / Delta H) (Methanobacterium thermoautotrophicum).